A 391-amino-acid polypeptide reads, in one-letter code: ATP phosphoribosyltransferase regulatory subunit (391 aa).

It belongs to the class-II aminoacyl-tRNA synthetase family. HisZ subfamily. As to quaternary structure, heteromultimer composed of HisG and HisZ subunits.

It localises to the cytoplasm. It functions in the pathway amino-acid biosynthesis; L-histidine biosynthesis; L-histidine from 5-phospho-alpha-D-ribose 1-diphosphate: step 1/9. In terms of biological role, required for the first step of histidine biosynthesis. May allow the feedback regulation of ATP phosphoribosyltransferase activity by histidine. In Prochlorococcus marinus (strain NATL1A), this protein is ATP phosphoribosyltransferase regulatory subunit.